A 307-amino-acid polypeptide reads, in one-letter code: F-box protein PP2-B7 (307 aa).

Residues 37–83 (PLSLGDLPEECISLIISFTSPRDACVFALVSKTFESAVQSDIVWEKF) form the F-box domain.

In Arabidopsis thaliana (Mouse-ear cress), this protein is F-box protein PP2-B7 (PP2B7).